Reading from the N-terminus, the 152-residue chain is Deoxyuridine 5'-triphosphate nucleotidohydrolase (152 aa).

Residues 71–73 (RSG), Asn-84, and 88–90 (TID) each bind substrate.

Belongs to the dUTPase family. Requires Mg(2+) as cofactor.

It catalyses the reaction dUTP + H2O = dUMP + diphosphate + H(+). It participates in pyrimidine metabolism; dUMP biosynthesis; dUMP from dCTP (dUTP route): step 2/2. In terms of biological role, this enzyme is involved in nucleotide metabolism: it produces dUMP, the immediate precursor of thymidine nucleotides and it decreases the intracellular concentration of dUTP so that uracil cannot be incorporated into DNA. In Roseobacter denitrificans (strain ATCC 33942 / OCh 114) (Erythrobacter sp. (strain OCh 114)), this protein is Deoxyuridine 5'-triphosphate nucleotidohydrolase.